Reading from the N-terminus, the 251-residue chain is 3-dehydroquinate dehydratase (251 aa).

3-dehydroquinate is bound by residues 47 to 49 (EWR) and Arg-83. His-144 functions as the Proton donor/acceptor in the catalytic mechanism. The active-site Schiff-base intermediate with substrate is the Lys-171. 3-dehydroquinate-binding residues include Arg-214, Ser-233, and Gln-237.

This sequence belongs to the type-I 3-dehydroquinase family. As to quaternary structure, homodimer.

The catalysed reaction is 3-dehydroquinate = 3-dehydroshikimate + H2O. It participates in metabolic intermediate biosynthesis; chorismate biosynthesis; chorismate from D-erythrose 4-phosphate and phosphoenolpyruvate: step 3/7. Involved in the third step of the chorismate pathway, which leads to the biosynthesis of aromatic amino acids. Catalyzes the cis-dehydration of 3-dehydroquinate (DHQ) and introduces the first double bond of the aromatic ring to yield 3-dehydroshikimate. This Klebsiella pneumoniae subsp. pneumoniae (strain ATCC 700721 / MGH 78578) protein is 3-dehydroquinate dehydratase.